Reading from the N-terminus, the 340-residue chain is GTP 3',8-cyclase (340 aa).

The Radical SAM core domain occupies 20–246 (RFERQYVYLR…PKALSDGPAK (227 aa)). Arg29 is a binding site for GTP. Residues Cys36 and Cys40 each contribute to the [4Fe-4S] cluster site. Residue Tyr42 participates in S-adenosyl-L-methionine binding. Cys43 is a binding site for [4Fe-4S] cluster. Arg79 contributes to the GTP binding site. Residue Gly83 participates in S-adenosyl-L-methionine binding. A GTP-binding site is contributed by Thr110. Residue Ser134 participates in S-adenosyl-L-methionine binding. Lys171 serves as a coordination point for GTP. Residue Met205 participates in S-adenosyl-L-methionine binding. 2 residues coordinate [4Fe-4S] cluster: Cys268 and Cys271. 273 to 275 (RLR) serves as a coordination point for GTP. Cys285 is a binding site for [4Fe-4S] cluster.

The protein belongs to the radical SAM superfamily. MoaA family. Monomer and homodimer. It depends on [4Fe-4S] cluster as a cofactor.

It carries out the reaction GTP + AH2 + S-adenosyl-L-methionine = (8S)-3',8-cyclo-7,8-dihydroguanosine 5'-triphosphate + 5'-deoxyadenosine + L-methionine + A + H(+). It functions in the pathway cofactor biosynthesis; molybdopterin biosynthesis. Catalyzes the cyclization of GTP to (8S)-3',8-cyclo-7,8-dihydroguanosine 5'-triphosphate. This Actinobacillus pleuropneumoniae serotype 3 (strain JL03) protein is GTP 3',8-cyclase.